Here is a 193-residue protein sequence, read N- to C-terminus: Thymidine kinase (193 aa).

ATP is bound by residues 9-16 (ASMNAGKS) and 87-90 (DEAQ). E88 (proton acceptor) is an active-site residue. C145, C147, C182, and H185 together coordinate Zn(2+).

The protein belongs to the thymidine kinase family. Homotetramer.

The protein resides in the cytoplasm. It catalyses the reaction thymidine + ATP = dTMP + ADP + H(+). This is Thymidine kinase from Zymomonas mobilis subsp. mobilis (strain ATCC 31821 / ZM4 / CP4).